A 121-amino-acid polypeptide reads, in one-letter code: uncharacterized protein (121 aa).

Residues 47-101 (SEVPHYHAEHDLTFTVLKGKGELYLEGEKKKLKEGDWAFIPKGAVHFYRNTSELS) form the Cupin type-2 domain.

This is an uncharacterized protein from Aquifex aeolicus (strain VF5).